The following is a 297-amino-acid chain: Cell division protein ZipA (297 aa).

Position 1 (M1) is a topological domain, periplasmic. A helical transmembrane segment spans residues 2–22 (EIGLREWLILIGIIVIAGILF). Residues 23 to 297 (DGWRRMRGGK…FERRALTQKR (275 aa)) lie on the Cytoplasmic side of the membrane. Residues 48–150 (DEEGGSAEVL…GAAPASSSVK (103 aa)) form a disordered region. Basic and acidic residues predominate over residues 83 to 92 (ARDREREPKP). Acidic residues predominate over residues 124–133 (LFADSDDDFA). Polar residues predominate over residues 136–149 (NNRSSGAAPASSSV).

The protein belongs to the ZipA family. Interacts with FtsZ via their C-terminal domains.

It localises to the cell inner membrane. Its function is as follows. Essential cell division protein that stabilizes the FtsZ protofilaments by cross-linking them and that serves as a cytoplasmic membrane anchor for the Z ring. Also required for the recruitment to the septal ring of downstream cell division proteins. This chain is Cell division protein ZipA, found in Pseudomonas putida (strain ATCC 700007 / DSM 6899 / JCM 31910 / BCRC 17059 / LMG 24140 / F1).